A 532-amino-acid polypeptide reads, in one-letter code: Neutral amino acid transporter A (532 aa).

Residue Met1 is modified to N-acetylmethionine. The interval 1–29 is disordered; sequence MEKSGETNGYLDGTQAEPAAGPRTPETAM. Over 1 to 41 the chain is Cytoplasmic; it reads MEKSGETNGYLDGTQAEPAAGPRTPETAMGKSQRCASFFRR. A run of 3 helical transmembrane segments spans residues 42–62, 88–108, and 119–139; these read HALV…GAAL, MIIL…LDAS, and AYFG…AFII. The Extracellular segment spans residues 140 to 216; it reads KPGAGAQTLQ…VTKEKIPVVT (77 aa). Residues Asn201 and Asn206 are each glycosylated (N-linked (GlcNAc...) asparagine). 6 consecutive transmembrane segments (helical) span residues 217–237, 257–277, 298–318, 328–348, 373–393, and 418–438; these read DVEG…GVAL, ATMV…MFLI, IFAS…LVYF, FLLG…SSAT, IGAT…AVFI, and VGAA…LEAI. The disordered stretch occupies residues 495-532; sequence EAIPNSKSEEETSPLVTHQNPAGPVAIAPELESKESVL. Phosphoserine occurs at positions 507, 527, and 530.

The protein belongs to the dicarboxylate/amino acid:cation symporter (DAACS) (TC 2.A.23) family. SLC1A4 subfamily.

The protein resides in the membrane. It is found in the melanosome. The enzyme catalyses L-threonine(in) + Na(+)(in) = L-threonine(out) + Na(+)(out). The catalysed reaction is L-serine(in) + Na(+)(in) = L-serine(out) + Na(+)(out). It catalyses the reaction L-cysteine(in) + Na(+)(in) = L-cysteine(out) + Na(+)(out). It carries out the reaction L-alanine(in) + Na(+)(in) = L-alanine(out) + Na(+)(out). The enzyme catalyses L-proline(in) + Na(+)(in) = L-proline(out) + Na(+)(out). The catalysed reaction is 4-hydroxy-L-proline(in) + Na(+)(in) = 4-hydroxy-L-proline(out) + Na(+)(out). Functionally, sodium-dependent neutral amino-acid transporter that mediates transport of alanine, serine, cysteine, proline, hydroxyproline and threonine. The protein is Neutral amino acid transporter A (Slc1a4) of Mus musculus (Mouse).